The primary structure comprises 842 residues: Leucine--tRNA ligase (842 aa).

Residues Pro44 to His55 carry the 'HIGH' region motif. The 'KMSKS' region signature appears at Lys619–Ser623. Lys622 provides a ligand contact to ATP.

It belongs to the class-I aminoacyl-tRNA synthetase family.

It is found in the cytoplasm. The enzyme catalyses tRNA(Leu) + L-leucine + ATP = L-leucyl-tRNA(Leu) + AMP + diphosphate. In Borrelia hermsii (strain HS1 / DAH), this protein is Leucine--tRNA ligase.